A 310-amino-acid polypeptide reads, in one-letter code: Low-salt glycan biosynthesis protein Agl12 (310 aa).

NAD(+) is bound by residues 7 to 13 (GGAGFIG), 32 to 35 (DALT), and 58 to 59 (DI). S82 contributes to the substrate binding site. T97 contacts NAD(+). Substrate-binding positions include T122 and 122–124 (TDE). D123 (proton donor) is an active-site residue. Catalysis depends on proton acceptor residues E124 and Y146. Residue 146 to 150 (YSATK) participates in NAD(+) binding. N175 provides a ligand contact to substrate. N176 is a binding site for NAD(+). Residues 185-186 (KL), 201-203 (PVY), R210, N245, and 269-272 (RAGH) contribute to the substrate site.

It belongs to the NAD(P)-dependent epimerase/dehydratase family. dTDP-glucose dehydratase subfamily. The cofactor is NAD(+).

Its pathway is protein modification; protein glycosylation. The protein operates within cell surface structure biogenesis; S-layer biogenesis. Lyase involved in N-glycan biosynthetic pathway that takes place under low-salt conditions (1.75 M instead of 3.4 M). Participates in the formation of the tetrasaccharide present at 'Asn-532' of S-layer glycoprotein Csg, consisting of a sulfated hexose, 2 hexoses and rhamnose. Involved in the addition of final rhamnose (sugar 4) of the tetrasaccharide on the dolichol phosphate carrier. This is Low-salt glycan biosynthesis protein Agl12 (agl12) from Haloferax volcanii (strain ATCC 29605 / DSM 3757 / JCM 8879 / NBRC 14742 / NCIMB 2012 / VKM B-1768 / DS2) (Halobacterium volcanii).